A 46-amino-acid polypeptide reads, in one-letter code: Defensin-like protein AX2 (46 aa).

Disulfide bonds link C3/C46, C14/C34, C20/C40, and C24/C42.

Leaves and flowers.

Functionally, strong inhibiting activity against C.beticola and other filamentous fungi. Little or no effect against bacteria. The polypeptide is Defensin-like protein AX2 (Beta vulgaris (Sugar beet)).